We begin with the raw amino-acid sequence, 280 residues long: Ribosomal RNA small subunit methyltransferase A (280 aa).

6 residues coordinate S-adenosyl-L-methionine: His-13, Leu-15, Gly-40, Glu-61, Asp-85, and Asn-106. Positions 258 to 280 (RPPADVEDANAPHTEQGKGDNSQ) are disordered.

Belongs to the class I-like SAM-binding methyltransferase superfamily. rRNA adenine N(6)-methyltransferase family. RsmA subfamily.

It is found in the cytoplasm. The enzyme catalyses adenosine(1518)/adenosine(1519) in 16S rRNA + 4 S-adenosyl-L-methionine = N(6)-dimethyladenosine(1518)/N(6)-dimethyladenosine(1519) in 16S rRNA + 4 S-adenosyl-L-homocysteine + 4 H(+). Functionally, specifically dimethylates two adjacent adenosines (A1518 and A1519) in the loop of a conserved hairpin near the 3'-end of 16S rRNA in the 30S particle. May play a critical role in biogenesis of 30S subunits. This is Ribosomal RNA small subunit methyltransferase A from Alcanivorax borkumensis (strain ATCC 700651 / DSM 11573 / NCIMB 13689 / SK2).